The sequence spans 588 residues: Pescadillo homolog (588 aa).

The interval Met-1–Val-54 is required for 28S ribosomal RNA processing. The tract at residues Met-1 to Glu-257 is sufficient for nucleolar localization. Lys-98 bears the N6-acetyllysine mark. The disordered stretch occupies residues Glu-294–Arg-314. The segment at Met-306–Ser-415 is sufficient for interaction with MAP1B. In terms of domain architecture, BRCT spans Lys-322–Ser-415. The interval Gly-448–Thr-515 is disordered. Residues Glu-456–Ala-486 are compositionally biased toward acidic residues. The span at Gly-487–Lys-508 shows a compositional bias: basic and acidic residues. Residue Lys-517 forms a Glycyl lysine isopeptide (Lys-Gly) (interchain with G-Cter in SUMO1); alternate linkage. Lys-517 participates in a covalent cross-link: Glycyl lysine isopeptide (Lys-Gly) (interchain with G-Cter in SUMO2); alternate. Positions Met-539–Glu-588 are required for 28S ribosomal RNA processing. The interval Leu-565–Glu-588 is disordered.

It belongs to the pescadillo family. In terms of assembly, component of the PeBoW complex, composed of BOP1, PES1 and WDR12. The complex is held together by BOP1, which interacts with PES1 via its N-terminal domain and with WDR12 via a high-affinity interaction between the seven-bladed beta-propeller domains of the 2 proteins. The PeBoW complex associates with the 66S pre-ribosome. The PeBoW complex also associates with DDX27, PES1 interacts directly with DDX27. Interacts with IRS1 and UBTF. May interact with MAP1B. Sumoylated. As to expression, significant levels are detected in a variety of cancer cell lines, including glioblastoma, breast carcinoma, colon carcinoma and cervical carcinoma cells. Levels are abnormally elevated in malignant tumors of astrocytic origin.

It localises to the nucleus. The protein resides in the nucleolus. Its subcellular location is the nucleoplasm. It is found in the chromosome. Component of the PeBoW complex, which is required for maturation of 28S and 5.8S ribosomal RNAs and formation of the 60S ribosome. This Homo sapiens (Human) protein is Pescadillo homolog.